Consider the following 770-residue polypeptide: DNA ligase 1 (770 aa).

Residues 1–18 (MSTGEGTAEQTATGTPAQ) show a composition bias toward low complexity. The segment at 1 to 27 (MSTGEGTAEQTATGTPAQNGRESIPSD) is disordered. Residues 57-61 (DAEFD), 106-107 (SL), and glutamate 142 each bind NAD(+). Lysine 144 acts as the N6-AMP-lysine intermediate in catalysis. 4 residues coordinate NAD(+): arginine 165, glutamate 202, lysine 318, and lysine 342. Zn(2+) contacts are provided by cysteine 439, cysteine 442, cysteine 458, and cysteine 464. The BRCT domain maps to 657-746 (STPRTLEGLT…PAAVGDAAEA (90 aa)). Positions 741–770 (GDAAEADGGDAPEESAALQEEKAAAVEETA) are disordered. Positions 744–753 (AEADGGDAPE) are enriched in acidic residues. Residues 759–770 (QEEKAAAVEETA) are compositionally biased toward basic and acidic residues.

Belongs to the NAD-dependent DNA ligase family. LigA subfamily. Mg(2+) is required as a cofactor. Mn(2+) serves as cofactor.

The catalysed reaction is NAD(+) + (deoxyribonucleotide)n-3'-hydroxyl + 5'-phospho-(deoxyribonucleotide)m = (deoxyribonucleotide)n+m + AMP + beta-nicotinamide D-nucleotide.. Its function is as follows. DNA ligase that catalyzes the formation of phosphodiester linkages between 5'-phosphoryl and 3'-hydroxyl groups in double-stranded DNA using NAD as a coenzyme and as the energy source for the reaction. It is essential for DNA replication and repair of damaged DNA. The sequence is that of DNA ligase 1 from Pseudarthrobacter chlorophenolicus (strain ATCC 700700 / DSM 12829 / CIP 107037 / JCM 12360 / KCTC 9906 / NCIMB 13794 / A6) (Arthrobacter chlorophenolicus).